Consider the following 739-residue polypeptide: Phosphoribosylformylglycinamidine synthase subunit PurL (739 aa).

Residue His-53 is part of the active site. Positions 56 and 95 each coordinate ATP. Glu-97 lines the Mg(2+) pocket. Substrate contacts are provided by residues 98–101 (SHNH) and Arg-120. The active-site Proton acceptor is His-99. Asp-121 serves as a coordination point for Mg(2+). Gln-244 contributes to the substrate binding site. Asp-274 provides a ligand contact to Mg(2+). Residue 318–320 (ESQ) participates in substrate binding. Positions 501 and 538 each coordinate ATP. Asn-539 serves as a coordination point for Mg(2+). Position 541 (Ser-541) interacts with substrate.

The protein belongs to the FGAMS family. Monomer. Part of the FGAM synthase complex composed of 1 PurL, 1 PurQ and 2 PurS subunits.

It localises to the cytoplasm. It catalyses the reaction N(2)-formyl-N(1)-(5-phospho-beta-D-ribosyl)glycinamide + L-glutamine + ATP + H2O = 2-formamido-N(1)-(5-O-phospho-beta-D-ribosyl)acetamidine + L-glutamate + ADP + phosphate + H(+). It participates in purine metabolism; IMP biosynthesis via de novo pathway; 5-amino-1-(5-phospho-D-ribosyl)imidazole from N(2)-formyl-N(1)-(5-phospho-D-ribosyl)glycinamide: step 1/2. In terms of biological role, part of the phosphoribosylformylglycinamidine synthase complex involved in the purines biosynthetic pathway. Catalyzes the ATP-dependent conversion of formylglycinamide ribonucleotide (FGAR) and glutamine to yield formylglycinamidine ribonucleotide (FGAM) and glutamate. The FGAM synthase complex is composed of three subunits. PurQ produces an ammonia molecule by converting glutamine to glutamate. PurL transfers the ammonia molecule to FGAR to form FGAM in an ATP-dependent manner. PurS interacts with PurQ and PurL and is thought to assist in the transfer of the ammonia molecule from PurQ to PurL. The chain is Phosphoribosylformylglycinamidine synthase subunit PurL from Listeria innocua serovar 6a (strain ATCC BAA-680 / CLIP 11262).